Consider the following 179-residue polypeptide: Large ribosomal subunit protein uL6 (179 aa).

Belongs to the universal ribosomal protein uL6 family. As to quaternary structure, part of the 50S ribosomal subunit.

Functionally, this protein binds to the 23S rRNA, and is important in its secondary structure. It is located near the subunit interface in the base of the L7/L12 stalk, and near the tRNA binding site of the peptidyltransferase center. The sequence is that of Large ribosomal subunit protein uL6 from Acaryochloris marina (strain MBIC 11017).